A 660-amino-acid chain; its full sequence is Pseudouridylate synthase 7 homolog (660 aa).

Positions 1–99 (MEMTSTSLKR…EAGEEEEAES (99 aa)) are disordered. Serine 7 bears the Phosphoserine mark. The span at 22-32 (TPHDETKKQKV) shows a compositional bias: basic and acidic residues. Over residues 76 to 99 (QEEEEEEEEEDGLSEAGEEEEAES) the composition is skewed to acidic residues. At serine 126 the chain carries Phosphoserine. Aspartate 293 (nucleophile) is an active-site residue. A TRUD domain is found at 369–579 (GFINYYGMQR…SGAYRRIIIR (211 aa)).

It belongs to the pseudouridine synthase TruD family. In terms of assembly, interacts with SIRT1.

Its subcellular location is the nucleus. The catalysed reaction is a uridine in tRNA = a pseudouridine in tRNA. It catalyses the reaction uridine(13) in tRNA = pseudouridine(13) in tRNA. The enzyme catalyses a uridine in mRNA = a pseudouridine in mRNA. Pseudouridylate synthase that catalyzes pseudouridylation of RNAs. Acts as a regulator of protein synthesis in embryonic stem cells by mediating pseudouridylation of RNA fragments derived from tRNAs (tRFs): pseudouridylated tRFs inhibit translation by targeting the translation initiation complex. Also catalyzes pseudouridylation of mRNAs: mediates pseudouridylation of mRNAs with the consensus sequence 5'-UGUAG-3'. Acts as a regulator of pre-mRNA splicing by mediating pseudouridylation of pre-mRNAs at locations associated with alternatively spliced regions. Pseudouridylation of pre-mRNAs near splice sites directly regulates mRNA splicing and mRNA 3'-end processing. In addition to mRNAs and tRNAs, binds other types of RNAs, such as snRNAs, Y RNAs and vault RNAs, suggesting that it can catalyze pseudouridylation of many RNA types. This chain is Pseudouridylate synthase 7 homolog, found in Mus musculus (Mouse).